The chain runs to 87 residues: Small ribosomal subunit protein bS20 (87 aa).

Residues 1 to 26 form a disordered region; that stretch reads MANIKSAKKRAIQSEKRRKHNASRRS.

Belongs to the bacterial ribosomal protein bS20 family.

In terms of biological role, binds directly to 16S ribosomal RNA. In Photorhabdus laumondii subsp. laumondii (strain DSM 15139 / CIP 105565 / TT01) (Photorhabdus luminescens subsp. laumondii), this protein is Small ribosomal subunit protein bS20.